The primary structure comprises 254 residues: 3-deoxy-manno-octulosonate cytidylyltransferase (254 aa).

The protein belongs to the KdsB family.

It is found in the cytoplasm. It catalyses the reaction 3-deoxy-alpha-D-manno-oct-2-ulosonate + CTP = CMP-3-deoxy-beta-D-manno-octulosonate + diphosphate. Its pathway is nucleotide-sugar biosynthesis; CMP-3-deoxy-D-manno-octulosonate biosynthesis; CMP-3-deoxy-D-manno-octulosonate from 3-deoxy-D-manno-octulosonate and CTP: step 1/1. It functions in the pathway bacterial outer membrane biogenesis; lipopolysaccharide biosynthesis. In terms of biological role, activates KDO (a required 8-carbon sugar) for incorporation into bacterial lipopolysaccharide in Gram-negative bacteria. The sequence is that of 3-deoxy-manno-octulosonate cytidylyltransferase from Chlamydia felis (strain Fe/C-56) (Chlamydophila felis).